A 506-amino-acid polypeptide reads, in one-letter code: 2,3-bisphosphoglycerate-independent phosphoglycerate mutase (506 aa).

Mn(2+)-binding residues include aspartate 12 and serine 63. The Phosphoserine intermediate role is filled by serine 63. Residues histidine 122, 151–152 (RD), arginine 182, arginine 188, 253–256 (RADR), and lysine 323 each bind substrate. The Mn(2+) site is built by aspartate 390, histidine 394, aspartate 432, histidine 433, and histidine 451.

Belongs to the BPG-independent phosphoglycerate mutase family. Monomer. Mn(2+) is required as a cofactor.

It carries out the reaction (2R)-2-phosphoglycerate = (2R)-3-phosphoglycerate. Its pathway is carbohydrate degradation; glycolysis; pyruvate from D-glyceraldehyde 3-phosphate: step 3/5. In terms of biological role, catalyzes the interconversion of 2-phosphoglycerate and 3-phosphoglycerate. The polypeptide is 2,3-bisphosphoglycerate-independent phosphoglycerate mutase (Wolbachia pipientis wMel).